Here is a 653-residue protein sequence, read N- to C-terminus: 4-hydroxy-2,2'-bipyrrole-5-methanol synthase PigH (653 aa).

The Carrier domain occupies 7 to 84; that stretch reads ETYETLKQSV…DALDGILQRE (78 aa). Ser-45 carries the post-translational modification O-(pantetheine 4'-phosphoryl)serine. 354 to 355 lines the pyridoxal 5'-phosphate pocket; it reads GY. His-379 is a binding site for substrate. Ser-426, His-454, and Thr-482 together coordinate pyridoxal 5'-phosphate. Lys-485 is modified (N6-(pyridoxal phosphate)lysine). The chain crosses the membrane as a helical span at residues 512-532; that stretch reads VFAATIPAPVAAGVIASIDVM.

It depends on pyridoxal 5'-phosphate as a cofactor.

The protein localises to the membrane. It participates in antibiotic biosynthesis; prodigiosin biosynthesis. Involved in the biosynthesis of 4-methoxy-2,2'-bipyrrole-5-carbaldehyde (MBC), one of the terminal products involved in the biosynthesis of the red antibiotic prodigiosin (Pig). Carrier of the L-malonyl group (malonyl-S-PigH), which is decarboxylated by PigJ to yield a C2 carbanion acetyl-S-PigH. Then the pyrrolyl group of pyrrolyl-S-cysteinyl PigJ intermediate is captured by the C2 carbanion acetyl-S-PigH to yield the pyrrolyl-beta-ketoacyl-S-PigH. In the last step, PigH catalyzes the decarboxylative condensation between the pyrrolyl-beta-ketoacyl (pyrrolyl-beta-ketoacyl-S-PigH) and L-serine to yield 4-hydroxy-2,2'-bipyrrole-5-methanol (HBM). The polypeptide is 4-hydroxy-2,2'-bipyrrole-5-methanol synthase PigH (Serratia sp. (strain ATCC 39006) (Prodigiosinella confusarubida)).